The sequence spans 298 residues: MTAEIIDGKAFAARLRERVGALAEKFEAAAGRKPGLAVVLVGEDPASEVYVRNKGKATLAANMESFEYKLPADTTAQDLLALVKKLNGDPAVDGILVQLPLPDHLDEQSIIAAISPDKDVDGFHVINAGRLSVGQRGFVPCTPLGCMMLLADRLGDLSGLEAVVIGRSNIVGKPMAQLLLDANATVTIAHSRTRNLPEVVKRADIVVAAVGRAEMVKPEWLKDGATVIDVGINRLPPEPGKERGRLVGDVDFGRASEVAAAITPVPGGVGPMTIAVLLRNTLVAAHRNEGIDLPEDAI.

Residues 166-168 (GRS), S191, and I232 each bind NADP(+).

The protein belongs to the tetrahydrofolate dehydrogenase/cyclohydrolase family. Homodimer.

It carries out the reaction (6R)-5,10-methylene-5,6,7,8-tetrahydrofolate + NADP(+) = (6R)-5,10-methenyltetrahydrofolate + NADPH. The catalysed reaction is (6R)-5,10-methenyltetrahydrofolate + H2O = (6R)-10-formyltetrahydrofolate + H(+). It functions in the pathway one-carbon metabolism; tetrahydrofolate interconversion. In terms of biological role, catalyzes the oxidation of 5,10-methylenetetrahydrofolate to 5,10-methenyltetrahydrofolate and then the hydrolysis of 5,10-methenyltetrahydrofolate to 10-formyltetrahydrofolate. This Erythrobacter litoralis (strain HTCC2594) protein is Bifunctional protein FolD.